Reading from the N-terminus, the 620-residue chain is 1-deoxy-D-xylulose-5-phosphate synthase (620 aa).

Thiamine diphosphate-binding positions include histidine 80 and 121–123; that span reads GHS. Mg(2+) is bound at residue aspartate 152. Thiamine diphosphate is bound by residues 153–154, asparagine 181, tyrosine 288, and glutamate 370; that span reads GA. Asparagine 181 provides a ligand contact to Mg(2+).

It belongs to the transketolase family. DXPS subfamily. Homodimer. It depends on Mg(2+) as a cofactor. Requires thiamine diphosphate as cofactor.

It carries out the reaction D-glyceraldehyde 3-phosphate + pyruvate + H(+) = 1-deoxy-D-xylulose 5-phosphate + CO2. Its pathway is metabolic intermediate biosynthesis; 1-deoxy-D-xylulose 5-phosphate biosynthesis; 1-deoxy-D-xylulose 5-phosphate from D-glyceraldehyde 3-phosphate and pyruvate: step 1/1. In terms of biological role, catalyzes the acyloin condensation reaction between C atoms 2 and 3 of pyruvate and glyceraldehyde 3-phosphate to yield 1-deoxy-D-xylulose-5-phosphate (DXP). This chain is 1-deoxy-D-xylulose-5-phosphate synthase, found in Escherichia coli (strain K12 / MC4100 / BW2952).